We begin with the raw amino-acid sequence, 218 residues long: MNSVTVSHAPYTITYHDDWEPVMSQLVEFYNEVASWLLRDETSPIPDKFFIQLKQPLRNKRVCVCGIDPYPKDGTGVPFESPNFTKKSIKEIASSISRLTGVIDYKGYNLNIIDGVIPWNYYLSCKLGETKSHAIYWDKISKLLLQHITKHVSVLYCLGKTDFSNIRAKLESPVTTIVGYHPAARDRQFEKDRSFEIINVLLELDNKAPINWAQGFIY.

Residue aspartate 68 is the Proton acceptor of the active site.

It belongs to the uracil-DNA glycosylase (UDG) superfamily. UNG family. In terms of assembly, homodimer. Interacts with protein OPG148. Component of the Uracil-DNA glycosylase(UDG)-OPG148-polymerase complex; OPG148 and UDG form a heterodimeric processivity factor that associates with OPG71 to form the processive polymerase holoenzyme.

It catalyses the reaction Hydrolyzes single-stranded DNA or mismatched double-stranded DNA and polynucleotides, releasing free uracil.. Its function is as follows. Plays an essential role in viral replication as a component of the DNA polymerase processivity factor. Excises uracil residues from the DNA which can arise as a result of misincorporation of dUMP residues by DNA polymerase or due to deamination of cytosine. This Vaccinia virus (strain Ankara) (VACV) protein is Uracil-DNA glycosylase (OPG116).